A 980-amino-acid chain; its full sequence is Putative formate dehydrogenase YrhE (980 aa).

The 2Fe-2S ferredoxin-type domain maps to 5 to 81 (KSISVRVDGT…GMSIDLSGNR (77 aa)). Residues Cys-39, Cys-50, Cys-53, and Cys-65 each coordinate [2Fe-2S] cluster. The region spanning 81–121 (RVKEAQTEAMDRLLENHLLYCTVCDNNNGNCTLHNTAEMMG) is the 4Fe-4S His(Cys)3-ligated-type domain. Positions 97, 101, 104, 111, 153, 156, 159, 163, 196, 199, 202, 206, 270, 273, 277, and 305 each coordinate [4Fe-4S] cluster. 4Fe-4S ferredoxin-type domains lie at 144–171 (PFYR…VNET) and 187–216 (EGVP…EKSM). Residues 258-980 (MRETRTKKTK…NRPGYVHLTD (723 aa)) are formate dehydrogenase. The 57-residue stretch at 263 to 319 (TKKTKTVCTFCGVGCSFEVWTKGRDILKIQPVSDAPVNAISTCVKGKFGWDFVNSKE) folds into the 4Fe-4S Mo/W bis-MGD-type domain. The disordered stretch occupies residues 944–980 (ETAPLPKTNPRNKKRHPQNGVEAERKWNRPGYVHLTD).

In the C-terminal section; belongs to the prokaryotic molybdopterin-containing oxidoreductase family. [2Fe-2S] cluster serves as cofactor. [4Fe-4S] cluster is required as a cofactor. The cofactor is Mo-bis(molybdopterin guanine dinucleotide).

It catalyses the reaction formate + NAD(+) = CO2 + NADH. The chain is Putative formate dehydrogenase YrhE (yrhE) from Bacillus subtilis (strain 168).